A 345-amino-acid polypeptide reads, in one-letter code: MMSKYPLLGMTLIELQSLVKRLGMPGFAAKQIASWLYDKKVTSIDEMTNLSLKYRELLKQNYEVGAEAPVEEMRSVDGTVKYLYPVGENHFVESVYIPDDERATLCISSQVGCKMNCKFCMTGKQGYSANLTAHQIINQIHSLPERDKLTNVVMMGMGEPLDNLEEVLKALDILTGSYGYAWSPKRITVSTVGLRKGLRRFIEESDCHLAISLHSPVTAQRAELMPAEKAFSITEMVELLKNYDFSKQRRLSFEYIVFKGLNDSQVYAKELLKLLRGLDCRMNLIRFHSIPGVALEGADMDTMTRFRDYLTTHGLFTTIRASRGEDIFAACGMLSTAKQEENNKS.

Catalysis depends on Glu93, which acts as the Proton acceptor. A Radical SAM core domain is found at 99–326 (DDERATLCIS…TTIRASRGED (228 aa)). Cys106 and Cys331 are disulfide-bonded. [4Fe-4S] cluster contacts are provided by Cys113, Cys117, and Cys120. S-adenosyl-L-methionine-binding positions include 158-159 (GE), Ser190, 212-214 (SLH), and His288. Cys331 (S-methylcysteine intermediate) is an active-site residue.

It belongs to the radical SAM superfamily. RlmN family. Requires [4Fe-4S] cluster as cofactor.

It localises to the cytoplasm. The catalysed reaction is adenosine(2503) in 23S rRNA + 2 reduced [2Fe-2S]-[ferredoxin] + 2 S-adenosyl-L-methionine = 2-methyladenosine(2503) in 23S rRNA + 5'-deoxyadenosine + L-methionine + 2 oxidized [2Fe-2S]-[ferredoxin] + S-adenosyl-L-homocysteine. It catalyses the reaction adenosine(37) in tRNA + 2 reduced [2Fe-2S]-[ferredoxin] + 2 S-adenosyl-L-methionine = 2-methyladenosine(37) in tRNA + 5'-deoxyadenosine + L-methionine + 2 oxidized [2Fe-2S]-[ferredoxin] + S-adenosyl-L-homocysteine. In terms of biological role, specifically methylates position 2 of adenine 2503 in 23S rRNA and position 2 of adenine 37 in tRNAs. The protein is Probable dual-specificity RNA methyltransferase RlmN of Bacteroides thetaiotaomicron (strain ATCC 29148 / DSM 2079 / JCM 5827 / CCUG 10774 / NCTC 10582 / VPI-5482 / E50).